A 74-amino-acid polypeptide reads, in one-letter code: Large ribosomal subunit protein bL27c (74 aa).

Belongs to the bacterial ribosomal protein bL27 family.

The protein localises to the plastid. It localises to the chloroplast. The polypeptide is Large ribosomal subunit protein bL27c (rpl27) (Pleurochrysis haptonemofera (Unicellular marine alga)).